The following is a 1317-amino-acid chain: DNA-directed RNA polymerase subunit beta' (1317 aa).

4 residues coordinate Zn(2+): Cys60, Cys62, Cys75, and Cys78. The Mg(2+) site is built by Asp535, Asp537, and Asp539. Zn(2+) is bound by residues Cys890, Cys967, Cys974, and Cys977.

It belongs to the RNA polymerase beta' chain family. The RNAP catalytic core consists of 2 alpha, 1 beta, 1 beta' and 1 omega subunit. When a sigma factor is associated with the core the holoenzyme is formed, which can initiate transcription. Mg(2+) is required as a cofactor. The cofactor is Zn(2+).

It carries out the reaction RNA(n) + a ribonucleoside 5'-triphosphate = RNA(n+1) + diphosphate. DNA-dependent RNA polymerase catalyzes the transcription of DNA into RNA using the four ribonucleoside triphosphates as substrates. In Mycolicibacterium smegmatis (strain ATCC 700084 / mc(2)155) (Mycobacterium smegmatis), this protein is DNA-directed RNA polymerase subunit beta'.